The following is a 109-amino-acid chain: UPF0122 protein Cbei_1174 (109 aa).

Belongs to the UPF0122 family.

Might take part in the signal recognition particle (SRP) pathway. This is inferred from the conservation of its genetic proximity to ftsY/ffh. May be a regulatory protein. The polypeptide is UPF0122 protein Cbei_1174 (Clostridium beijerinckii (strain ATCC 51743 / NCIMB 8052) (Clostridium acetobutylicum)).